The sequence spans 419 residues: Creatine kinase S-type, mitochondrial (419 aa).

Residues 1–39 (MASTFSKLLTGRNASLLFATLGTSALTTGYLVNRQKVCA) constitute a mitochondrion transit peptide. Residues 40 to 64 (EARDQHKLFPPSADYPDLRKHNNCM) form a cardiolipin-binding region. One can recognise a Phosphagen kinase N-terminal domain in the interval 46–132 (KLFPPSADYP…FDPVIKLRHN (87 aa)). Positions 159–401 (YVLSSRVRTG…NYLVDCEKKL (243 aa)) constitute a Phosphagen kinase C-terminal domain. Residues 162-166 (SSRVR) and histidine 225 contribute to the ATP site. Tyrosine 255 bears the Phosphotyrosine mark. Residues arginine 270, arginine 326, 354–359 (RGTGGV), and aspartate 369 contribute to the ATP site. The residue at position 356 (threonine 356) is a Phosphothreonine.

The protein belongs to the ATP:guanido phosphotransferase family. In terms of assembly, exists as an octamer composed of four CKMT2 homodimers.

The protein resides in the mitochondrion inner membrane. The enzyme catalyses creatine + ATP = N-phosphocreatine + ADP + H(+). Functionally, reversibly catalyzes the transfer of phosphate between ATP and various phosphogens (e.g. creatine phosphate). Creatine kinase isoenzymes play a central role in energy transduction in tissues with large, fluctuating energy demands, such as skeletal muscle, heart, brain and spermatozoa. The protein is Creatine kinase S-type, mitochondrial (CKMT2) of Oryctolagus cuniculus (Rabbit).